The following is a 56-amino-acid chain: UPF0391 membrane protein Jann_3570 (56 aa).

A run of 2 helical transmembrane segments spans residues 4–24 and 29–48; these read WAVTFLIIALIAALFGFGGIA and GIAQILFFVFIALFAISLVA.

This sequence belongs to the UPF0391 family.

Its subcellular location is the cell membrane. The sequence is that of UPF0391 membrane protein Jann_3570 from Jannaschia sp. (strain CCS1).